The sequence spans 479 residues: Bifunctional aspartate aminotransferase and glutamate/aspartate-prephenate aminotransferase (479 aa).

A chloroplast-targeting transit peptide spans 1-79 (MAATTTTSSS…VEVDISLSPR (79 aa)). Gly-111 is a binding site for L-aspartate. A pyridoxal 5'-phosphate-binding site is contributed by 172-173 (AK). Residues Trp-197 and Asn-247 each contribute to the L-aspartate site. Residues Asn-247, Tyr-279, and 307–309 (GFS) each bind pyridoxal 5'-phosphate. Position 310 is an N6-(pyridoxal phosphate)lysine (Lys-310). Arg-318 is a pyridoxal 5'-phosphate binding site. L-aspartate is bound at residue Arg-449.

This sequence belongs to the class-I pyridoxal-phosphate-dependent aminotransferase family. As to quaternary structure, homodimer. The cofactor is pyridoxal 5'-phosphate. Expressed in flowers, pistils, stamens, ovaries and at lower levels in leaves and sepals.

It is found in the plastid. The protein resides in the chloroplast. It carries out the reaction L-aspartate + 2-oxoglutarate = oxaloacetate + L-glutamate. The catalysed reaction is L-arogenate + oxaloacetate = prephenate + L-aspartate. It catalyses the reaction L-arogenate + 2-oxoglutarate = prephenate + L-glutamate. The protein operates within amino-acid biosynthesis; L-phenylalanine biosynthesis; L-arogenate from prephenate (L-Asp route): step 1/1. It functions in the pathway amino-acid biosynthesis; L-phenylalanine biosynthesis; L-arogenate from prephenate (L-Glu route): step 1/1. Functionally, prokaryotic-type aspartate aminotransferase. Also has a prenate transaminase activity. Involved in the aromatic amino acids biosynthesis pathway via the arogenate route. Required for the transamination of prephenate into arogenate. Can use 2-oxoglutarate, oxaloacetate and prephenate as substrates, but not phenylpyruvate or 4-hydroxyphenylpyruvate. This chain is Bifunctional aspartate aminotransferase and glutamate/aspartate-prephenate aminotransferase, found in Petunia hybrida (Petunia).